Reading from the N-terminus, the 397-residue chain is Serpin B10 (397 aa).

Residues Cys68 and Cys395 are joined by a disulfide bond. The Nuclear localization signal motif lies at 74–77; the sequence is KKRK.

Belongs to the serpin family. Ov-serpin subfamily. As to expression, expressed specifically in myeloid cells and the bone marrow.

Its subcellular location is the nucleus. It localises to the cytoplasm. Functionally, protease inhibitor that may play a role in the regulation of protease activities during hematopoiesis and apoptosis induced by TNF. May regulate protease activities in the cytoplasm and in the nucleus. The protein is Serpin B10 (SERPINB10) of Homo sapiens (Human).